The following is a 170-amino-acid chain: Peptide deformylase (170 aa).

Cys94 and His136 together coordinate Fe cation. Glu137 is an active-site residue. His140 lines the Fe cation pocket.

Belongs to the polypeptide deformylase family. The cofactor is Fe(2+).

It carries out the reaction N-terminal N-formyl-L-methionyl-[peptide] + H2O = N-terminal L-methionyl-[peptide] + formate. Removes the formyl group from the N-terminal Met of newly synthesized proteins. Requires at least a dipeptide for an efficient rate of reaction. N-terminal L-methionine is a prerequisite for activity but the enzyme has broad specificity at other positions. The polypeptide is Peptide deformylase (Agrobacterium fabrum (strain C58 / ATCC 33970) (Agrobacterium tumefaciens (strain C58))).